Consider the following 522-residue polypeptide: Glutamate--cysteine ligase, chloroplastic (522 aa).

2 disulfide bridges follow: C186-C406 and C349-C364.

This sequence belongs to the carboxylate-amine ligase family. Glutamate--cysteine ligase type 2 subfamily. In terms of assembly, homodimer or monomer when oxidized or reduced, respectively. The Cys-186-Cys-406 disulfide bridge is known to modulate the enzyme activity according to the redox status. The oxidized form constitutes the active enzyme. As to expression, abundant in leaves and roots. Expressed to a high level in leaf trichomes of mature plant.

The protein resides in the plastid. It is found in the chloroplast. It carries out the reaction L-cysteine + L-glutamate + ATP = gamma-L-glutamyl-L-cysteine + ADP + phosphate + H(+). It participates in sulfur metabolism; glutathione biosynthesis; glutathione from L-cysteine and L-glutamate: step 1/2. Its activity is regulated as follows. Feedback inhibition by glutathione. Inhibited by buthionine sulfoximine and cystamine. Seems to play an important role in controlling the expression of resistance responses like the regulation of salicylic acid (SA) and phytoalexin (camalexin) production. Involved in resistance to fungal and bacterial pathogens. Required for the regulation of cell proliferation in root apical meristems through the GSH-dependent developmental pathway. Also participates in the detoxification process, the antioxidant response and is essential for embryo development and proper seed maturation. The sequence is that of Glutamate--cysteine ligase, chloroplastic (GSH1) from Arabidopsis thaliana (Mouse-ear cress).